Consider the following 279-residue polypeptide: Undecaprenyl-diphosphatase (279 aa).

8 consecutive transmembrane segments (helical) span residues 2 to 22 (LIIELLKAIFFGIIEGITEWL), 44 to 64 (AFIEMFNIVIQLGAIIAVMLI), 85 to 105 (WQLWLKVVIACIPSILIAVPL), 113 to 133 (FYFMVPIAIALIVYGIAFIWI), 163 to 183 (VLSIVPGTSRSGATILGAIIL), 188 to 208 (TVAADFTFFLAIPTMFGYSGL), 223 to 243 (AQVLILLVASLTAFVVSLLAI), and 255 to 275 (FTIFGKYRIVLGSLLLIYSFF).

This sequence belongs to the UppP family.

The protein localises to the cell membrane. The enzyme catalyses di-trans,octa-cis-undecaprenyl diphosphate + H2O = di-trans,octa-cis-undecaprenyl phosphate + phosphate + H(+). Functionally, catalyzes the dephosphorylation of undecaprenyl diphosphate (UPP). Confers resistance to bacitracin. The chain is Undecaprenyl-diphosphatase from Streptococcus pyogenes serotype M12 (strain MGAS2096).